We begin with the raw amino-acid sequence, 256 residues long: Distal membrane-arm assembly complex protein 2 (256 aa).

The residue at position 252 (S252) is a Phosphoserine.

It belongs to the ATP synthase subunit s family. As to quaternary structure, interacts with incompletely assembled mitochondrial NADH:ubiquinone oxidoreductase complex (complex I).

It localises to the mitochondrion. Functionally, required for the assembly of the mitochondrial NADH:ubiquinone oxidoreductase complex (complex I). Involved in the assembly of the distal region of complex I. This is Distal membrane-arm assembly complex protein 2 from Macaca fascicularis (Crab-eating macaque).